Reading from the N-terminus, the 314-residue chain is Porphobilinogen deaminase (314 aa).

An S-(dipyrrolylmethanemethyl)cysteine modification is found at Cys249.

This sequence belongs to the HMBS family. As to quaternary structure, monomer. Requires dipyrromethane as cofactor.

The enzyme catalyses 4 porphobilinogen + H2O = hydroxymethylbilane + 4 NH4(+). It functions in the pathway porphyrin-containing compound metabolism; protoporphyrin-IX biosynthesis; coproporphyrinogen-III from 5-aminolevulinate: step 2/4. Tetrapolymerization of the monopyrrole PBG into the hydroxymethylbilane pre-uroporphyrinogen in several discrete steps. The protein is Porphobilinogen deaminase of Brucella anthropi (strain ATCC 49188 / DSM 6882 / CCUG 24695 / JCM 21032 / LMG 3331 / NBRC 15819 / NCTC 12168 / Alc 37) (Ochrobactrum anthropi).